A 152-amino-acid chain; its full sequence is Large ribosomal subunit protein uL13 (152 aa).

The protein belongs to the universal ribosomal protein uL13 family. As to quaternary structure, part of the 50S ribosomal subunit.

Its function is as follows. This protein is one of the early assembly proteins of the 50S ribosomal subunit, although it is not seen to bind rRNA by itself. It is important during the early stages of 50S assembly. The chain is Large ribosomal subunit protein uL13 from Wolbachia pipientis wMel.